Consider the following 204-residue polypeptide: Holliday junction resolvase RecU (204 aa).

4 residues coordinate Mg(2+): Thr89, Asp91, Asp104, and Gln123.

This sequence belongs to the RecU family. Mg(2+) serves as cofactor.

It is found in the cytoplasm. It catalyses the reaction Endonucleolytic cleavage at a junction such as a reciprocal single-stranded crossover between two homologous DNA duplexes (Holliday junction).. In terms of biological role, endonuclease that resolves Holliday junction intermediates in genetic recombination. Cleaves mobile four-strand junctions by introducing symmetrical nicks in paired strands. Promotes annealing of linear ssDNA with homologous dsDNA. Required for DNA repair, homologous recombination and chromosome segregation. In Leuconostoc mesenteroides subsp. mesenteroides (strain ATCC 8293 / DSM 20343 / BCRC 11652 / CCM 1803 / JCM 6124 / NCDO 523 / NBRC 100496 / NCIMB 8023 / NCTC 12954 / NRRL B-1118 / 37Y), this protein is Holliday junction resolvase RecU.